Here is a 389-residue protein sequence, read N- to C-terminus: GTPase Obg (389 aa).

Residues 1 to 159 form the Obg domain; sequence MKFVDEAVIR…RSLKLELMLL (159 aa). Positions 122–144 are disordered; sequence FHGLGNTRFKSSTNRAPRQKTLG. Positions 160 to 333 constitute an OBG-type G domain; the sequence is ADVGLLGMPN…LSLKLIDFIE (174 aa). GTP is bound by residues 166 to 173, 191 to 195, 213 to 216, 283 to 286, and 314 to 316; these read GMPNAGKS, FTTLV, DIPG, NKTD, and SAY. The Mg(2+) site is built by Ser-173 and Thr-193.

This sequence belongs to the TRAFAC class OBG-HflX-like GTPase superfamily. OBG GTPase family. As to quaternary structure, monomer. Requires Mg(2+) as cofactor.

It is found in the cytoplasm. In terms of biological role, an essential GTPase which binds GTP, GDP and possibly (p)ppGpp with moderate affinity, with high nucleotide exchange rates and a fairly low GTP hydrolysis rate. Plays a role in control of the cell cycle, stress response, ribosome biogenesis and in those bacteria that undergo differentiation, in morphogenesis control. The protein is GTPase Obg of Shewanella woodyi (strain ATCC 51908 / MS32).